Consider the following 69-residue polypeptide: DNA-directed RNA polymerase subunit epsilon (69 aa).

This sequence belongs to the RNA polymerase subunit epsilon family. As to quaternary structure, RNAP is composed of a core of 2 alpha, a beta and a beta' subunit. The core is associated with a delta subunit, and at least one of epsilon or omega. When a sigma factor is associated with the core the holoenzyme is formed, which can initiate transcription.

It catalyses the reaction RNA(n) + a ribonucleoside 5'-triphosphate = RNA(n+1) + diphosphate. A non-essential component of RNA polymerase (RNAP). The polypeptide is DNA-directed RNA polymerase subunit epsilon (Lysinibacillus sphaericus (strain C3-41)).